The primary structure comprises 89 residues: Large ribosomal subunit protein eL37A (89 aa).

The Zn(2+) site is built by Cys-19, Cys-22, Cys-34, and Cys-37. The segment at 19–37 adopts a C4-type zinc-finger fold; it reads CRRCGKRSFHIQKSTCACC.

This sequence belongs to the eukaryotic ribosomal protein eL37 family. In terms of assembly, component of the large ribosomal subunit (LSU). Mature yeast ribosomes consist of a small (40S) and a large (60S) subunit. The 40S small subunit contains 1 molecule of ribosomal RNA (18S rRNA) and at least 33 different proteins. The large 60S subunit contains 3 rRNA molecules (25S, 5.8S and 5S rRNA) and at least 46 different proteins. It depends on Zn(2+) as a cofactor.

The protein resides in the cytoplasm. In terms of biological role, component of the ribosome, a large ribonucleoprotein complex responsible for the synthesis of proteins in the cell. The small ribosomal subunit (SSU) binds messenger RNAs (mRNAs) and translates the encoded message by selecting cognate aminoacyl-transfer RNA (tRNA) molecules. The large subunit (LSU) contains the ribosomal catalytic site termed the peptidyl transferase center (PTC), which catalyzes the formation of peptide bonds, thereby polymerizing the amino acids delivered by tRNAs into a polypeptide chain. The nascent polypeptides leave the ribosome through a tunnel in the LSU and interact with protein factors that function in enzymatic processing, targeting, and the membrane insertion of nascent chains at the exit of the ribosomal tunnel. This chain is Large ribosomal subunit protein eL37A (rpl3703), found in Schizosaccharomyces pombe (strain 972 / ATCC 24843) (Fission yeast).